We begin with the raw amino-acid sequence, 209 residues long: Imidazole glycerol phosphate synthase subunit HisH (209 aa).

Positions 1 to 205 (MIAIIDYGMG…KGVVETWKSS (205 aa)) constitute a Glutamine amidotransferase type-1 domain. Cys79 functions as the Nucleophile in the catalytic mechanism. Residues His180 and Glu182 contribute to the active site.

Heterodimer of HisH and HisF.

It localises to the cytoplasm. The catalysed reaction is 5-[(5-phospho-1-deoxy-D-ribulos-1-ylimino)methylamino]-1-(5-phospho-beta-D-ribosyl)imidazole-4-carboxamide + L-glutamine = D-erythro-1-(imidazol-4-yl)glycerol 3-phosphate + 5-amino-1-(5-phospho-beta-D-ribosyl)imidazole-4-carboxamide + L-glutamate + H(+). The enzyme catalyses L-glutamine + H2O = L-glutamate + NH4(+). It participates in amino-acid biosynthesis; L-histidine biosynthesis; L-histidine from 5-phospho-alpha-D-ribose 1-diphosphate: step 5/9. In terms of biological role, IGPS catalyzes the conversion of PRFAR and glutamine to IGP, AICAR and glutamate. The HisH subunit catalyzes the hydrolysis of glutamine to glutamate and ammonia as part of the synthesis of IGP and AICAR. The resulting ammonia molecule is channeled to the active site of HisF. This chain is Imidazole glycerol phosphate synthase subunit HisH, found in Bacillus thuringiensis subsp. konkukian (strain 97-27).